Consider the following 681-residue polypeptide: Chaperone protein HtpG (681 aa).

The a; substrate-binding stretch occupies residues 1–326 (MQKGNIGVTT…SPDIPLNVSR (326 aa)). Positions 327-545 (SYLQSDSNVK…YMRRMKEMAN (219 aa)) are b. The interval 546–681 (IQAGMSFYGE…NFVKRSIELI (136 aa)) is c. A disordered region spans residues 589–620 (IQTEMNSVSKRRNELKDSQKDKKEEDIPTAEK). A compositionally biased stretch (basic and acidic residues) spans 599–620 (RRNELKDSQKDKKEEDIPTAEK).

The protein belongs to the heat shock protein 90 family. Homodimer.

Its subcellular location is the cytoplasm. In terms of biological role, molecular chaperone. Has ATPase activity. This Bacteroides thetaiotaomicron (strain ATCC 29148 / DSM 2079 / JCM 5827 / CCUG 10774 / NCTC 10582 / VPI-5482 / E50) protein is Chaperone protein HtpG.